The sequence spans 206 residues: Probable glutathione S-transferase 6 (206 aa).

Residues 2 to 79 (VHYKLVYFPL…YLAREFGIAG (78 aa)) enclose the GST N-terminal domain. Glutathione contacts are provided by residues tyrosine 8, tryptophan 39, lysine 43, 49–51 (GQL), and 63–64 (QS). Residues 81–206 (NDTEAAEVDA…YIANRPDYPF (126 aa)) form the GST C-terminal domain.

It belongs to the GST superfamily. Sigma family.

The enzyme catalyses RX + glutathione = an S-substituted glutathione + a halide anion + H(+). In terms of biological role, conjugation of reduced glutathione to a wide number of exogenous and endogenous hydrophobic electrophiles. This chain is Probable glutathione S-transferase 6 (gst-6), found in Caenorhabditis elegans.